A 144-amino-acid chain; its full sequence is uncharacterized protein (144 aa).

Residues 13–120 (IFCGIVEGNV…VPKYETGLGF (108 aa)) enclose the HIT domain. Positions 105 to 109 (HYHMH) match the Histidine triad motif motif.

This is an uncharacterized protein from Mycoplasma pneumoniae (strain ATCC 29342 / M129 / Subtype 1) (Mycoplasmoides pneumoniae).